Reading from the N-terminus, the 317-residue chain is Probable methyltransferase tdiE (317 aa).

It belongs to the methyltransferase superfamily. LaeA methyltransferase family.

Its pathway is secondary metabolite biosynthesis. Its function is as follows. Probable methyltransferase; part of the gene cluster that mediates the biosynthesis of terrequinone A, an antitumor agent. The first step in the biosynthetic pathway for terrequinone A is formation of indole pyruvic acid (IPA) from L-tryptophan by the aminotransferase tdiD. The nonribosomal peptide synthase tdiA then immediately converts unstable IPA to didemethylasterriquinone D (DDAQ D), via condensation of 2 IPA molecules. The symmetric connectivity of the 2 IPA molecules is thought to arise by head-to-tail dual Claisen condensations facilitated by the TE domain. TdiB then catalyzes reverse prenylation by transferring dimethylallyl diphosphate to carbon atom 2' of DDAQ D, to yield asterriquinone C-1. Finally, tdiC and tdiE enzymes robustly convert asterriquinone C-1 to terrequinone A via a transformation involving regular prenylation at carbon atom 5, which requires elimination of the hydroxy group on C-5. The sequence is that of Probable methyltransferase tdiE from Emericella nidulans (strain FGSC A4 / ATCC 38163 / CBS 112.46 / NRRL 194 / M139) (Aspergillus nidulans).